Reading from the N-terminus, the 194-residue chain is E3 ubiquitin-protein ligase RNF185 (194 aa).

Over residues 1 to 27 (MASAAASESSSSSSSSSAGAANGQSAG) the composition is skewed to low complexity. The disordered stretch occupies residues 1-32 (MASAAASESSSSSSSSSAGAANGQSAGESGGG). The tract at residues 31–82 (GGGAQDSTFECNICLDTSKDAVISLCGHLFCWPCLHQWLETRPNRQVCPVCK) is required for ubiquitin ligase activity and protection against ER stress-induced cell death. The RING-type zinc finger occupies 41-82 (CNICLDTSKDAVISLCGHLFCWPCLHQWLETRPNRQVCPVCK). The tract at residues 92–126 (PLYGRGSTGQQDPREKTPPRPQGQRPEPENRGGFQ) is disordered. 2 helical membrane-spanning segments follow: residues 133–153 (GGFQ…ATAF) and 174–194 (QFLS…LLIA).

The protein resides in the mitochondrion outer membrane. Its subcellular location is the endoplasmic reticulum membrane. It catalyses the reaction S-ubiquitinyl-[E2 ubiquitin-conjugating enzyme]-L-cysteine + [acceptor protein]-L-lysine = [E2 ubiquitin-conjugating enzyme]-L-cysteine + N(6)-ubiquitinyl-[acceptor protein]-L-lysine.. It functions in the pathway protein modification; protein ubiquitination. E3 ubiquitin-protein ligase that regulates selective mitochondrial autophagy by mediating 'Lys-63'-linked polyubiquitination. Acts in the endoplasmic reticulum (ER)-associated degradation (ERAD) pathway, which targets misfolded proteins that accumulate in the endoplasmic reticulum (ER) for ubiquitination and subsequent proteasome-mediated degradation. Protects cells from ER stress-induced apoptosis. Responsible for the cotranslational ubiquitination and degradation of CFTR in the ERAD pathway. Also acts as a regulator of the innate antiviral response by catalyzing 'Lys-27'-linked polyubiquitination of CGAS, thereby promoting CGAS cyclic GMP-AMP synthase activity. Preferentially associates with the E2 enzymes UBE2J1 and UBE2J2. The polypeptide is E3 ubiquitin-protein ligase RNF185 (rnf185) (Danio rerio (Zebrafish)).